A 228-amino-acid chain; its full sequence is Glucose-induced degradation protein 8 homolog (228 aa).

In terms of domain architecture, LisH spans 25-57; that stretch reads QRADMNRLIMNYLVTEGFKEAAEKFRMESGIEP. The region spanning 63 to 120 is the CTLH domain; sequence TLDERIKIREMILKGQIQEAIALINSLHPELLDTNRYLYFHLQQQHLIELIRQRETEA. The tract at residues 116–212 is interaction with CTNNB1; it reads RETEAALEFA…QNELDQKKVK (97 aa).

It belongs to the GID8 family. Homodimer; may also form higher oligomers. Identified in the CTLH complex that contains GID4, RANBP9 and/or RANBP10, MKLN1, MAEA, RMND5A (or alternatively its paralog RMND5B), GID8, ARMC8, WDR26 and YPEL5. Within this complex, MAEA, RMND5A (or alternatively its paralog RMND5B), GID8, WDR26, and RANBP9 and/or RANBP10 form the catalytic core, while GID4, MKLN1, ARMC8 and YPEL5 have ancillary roles. Interacts with RANBP9. Part of a complex consisting of RANBP9, MKLN1 and GID8. Interacts with CTNNB1, AXIN1 and GSK3B. Polyubiquitinated through 'Lys-48'-polyubiquitin chains, leading to proteasomal degradation in the absence of Wnt stimulation.

It localises to the cytoplasm. The protein localises to the nucleus. Functionally, core component of the CTLH E3 ubiquitin-protein ligase complex that selectively accepts ubiquitin from UBE2H and mediates ubiquitination and subsequent proteasomal degradation of the transcription factor HBP1. Acts as a positive regulator of Wnt signaling pathway by promoting beta-catenin (CTNNB1) nuclear accumulation. The sequence is that of Glucose-induced degradation protein 8 homolog (GID8) from Bos taurus (Bovine).